Here is a 404-residue protein sequence, read N- to C-terminus: MEQQKKTAGKKAGSWSLLMGAAFLMATSAIGPGFLTQTATFTNTLAASFGFVILISIILDIFAQTNVWRIIAVSGKRGQEIANMVLPGLGYFIAILVVLGGLAFNIGNIGGAGLGLQVLFGITPETGALISAVIAILIFVIKEAGKAMDRFTQIAGFVMIILTVYVAATTAPPVGQAVANTFVPEHISIFAIVTLVGGTVGGYITFAGGHRLLDAGIKGKESIPQVTKSSVVGILITSVMRIALFLAVLGVVSKGLHIDESNPAASVFKLAAGNVGYKIFGLIMWSAAITSVIGAAYTSVSFFKTFSPKIEKNSRGIIIGFIVVSTLAFVTIGQPAKILVLVGSLNGLILPIALGTLLVAAYKKNIVGDYKHPLWLTSTGALVVIVMAVMGIYTLCTQLPQLWS.

11 consecutive transmembrane segments (helical) span residues 15–35 (WSLL…PGFL), 43–63 (NTLA…DIFA), 84–104 (MVLP…GLAF), 121–141 (GITP…IFVI), 154–174 (IAGF…APPV), 187–207 (ISIF…ITFA), 231–251 (VVGI…VLGV), 279–299 (IFGL…AYTS), 316–336 (GIII…GQPA), 338–358 (ILVL…GTLL), and 373–393 (PLWL…MGIY).

The protein belongs to the NRAMP family.

It localises to the cell membrane. This is an uncharacterized protein from Bacillus subtilis (strain 168).